The following is a 497-amino-acid chain: Glutathione hydrolase 6 (497 aa).

Residues 1–34 (MDATTGPVHYHKLQLWEPGVESEEEEEEEEEEIA) form a disordered region. Over 1 to 51 (MDATTGPVHYHKLQLWEPGVESEEEEEEEEEEIAEPLVLSLRRLQNTPRNE) the chain is Cytoplasmic. The segment covering 20 to 34 (VESEEEEEEEEEEIA) has biased composition (acidic residues). The chain crosses the membrane as a helical; Signal-anchor for type II membrane protein span at residues 52 to 72 (VGGLPGAWARLLAGLLLLAVS). Over 73–497 (SSLALRQLHS…PSGCCPFQGY (425 aa)) the chain is Extracellular. N-linked (GlcNAc...) asparagine glycosylation is found at Asn164, Asn169, Asn367, and Asn378.

The protein belongs to the gamma-glutamyltransferase family. As to quaternary structure, heterodimer composed of the light and heavy chains. The active site is located in the light chain. In terms of processing, cleaved by autocatalysis into a large and a small subunit and the autocatalytic cleavage is essential to the functional activation of the enzyme.

It localises to the membrane. The enzyme catalyses an N-terminal (5-L-glutamyl)-[peptide] + an alpha-amino acid = 5-L-glutamyl amino acid + an N-terminal L-alpha-aminoacyl-[peptide]. It carries out the reaction glutathione + H2O = L-cysteinylglycine + L-glutamate. It catalyses the reaction an S-substituted glutathione + H2O = an S-substituted L-cysteinylglycine + L-glutamate. It participates in sulfur metabolism; glutathione metabolism. Functionally, hydrolyzes and transfers gamma-glutamyl moieties from glutathione and other gamma-glutamyl compounds to acceptors. The sequence is that of Glutathione hydrolase 6 from Mus musculus (Mouse).